Here is a 291-residue protein sequence, read N- to C-terminus: Pyridoxal 5'-phosphate synthase subunit PdxS (291 aa).

D23 contacts D-ribose 5-phosphate. Catalysis depends on K80, which acts as the Schiff-base intermediate with D-ribose 5-phosphate. Residue G152 participates in D-ribose 5-phosphate binding. Residue R164 participates in D-glyceraldehyde 3-phosphate binding. D-ribose 5-phosphate contacts are provided by residues G213 and 234-235 (GS).

It belongs to the PdxS/SNZ family. As to quaternary structure, in the presence of PdxT, forms a dodecamer of heterodimers.

It catalyses the reaction aldehydo-D-ribose 5-phosphate + D-glyceraldehyde 3-phosphate + L-glutamine = pyridoxal 5'-phosphate + L-glutamate + phosphate + 3 H2O + H(+). Its pathway is cofactor biosynthesis; pyridoxal 5'-phosphate biosynthesis. Catalyzes the formation of pyridoxal 5'-phosphate from ribose 5-phosphate (RBP), glyceraldehyde 3-phosphate (G3P) and ammonia. The ammonia is provided by the PdxT subunit. Can also use ribulose 5-phosphate and dihydroxyacetone phosphate as substrates, resulting from enzyme-catalyzed isomerization of RBP and G3P, respectively. The protein is Pyridoxal 5'-phosphate synthase subunit PdxS of Bifidobacterium longum (strain NCC 2705).